Here is a 120-residue protein sequence, read N- to C-terminus: Ribonuclease P protein component 2 (120 aa).

Belongs to the eukaryotic/archaeal RNase P protein component 2 family. As to quaternary structure, consists of a catalytic RNA component and at least 4-5 protein subunits. Forms a subcomplex with Rnp3 which stimulates the catalytic RNA.

The protein localises to the cytoplasm. It carries out the reaction Endonucleolytic cleavage of RNA, removing 5'-extranucleotides from tRNA precursor.. Functionally, part of ribonuclease P, a protein complex that generates mature tRNA molecules by cleaving their 5'-ends. The RNA is catalytic, but its KM for pre-tRNA is 170-fold decreased in the presence of the 4 known protein subunits (Rnp1-4). The protein subunits also decrease the amount of Mg(2+) needed for activity. The protein is Ribonuclease P protein component 2 of Pyrococcus furiosus (strain ATCC 43587 / DSM 3638 / JCM 8422 / Vc1).